We begin with the raw amino-acid sequence, 1349 residues long: Zinc finger protein 804B (1349 aa).

The C2H2-type zinc-finger motif lies at 55–79; sequence FYCELCDKQYHKHQEFDNHINSYDH. Residues 985 to 1010 form a disordered region; the sequence is YASESRNDQDSAIPRTTEKDKSKSSH.

This is Zinc finger protein 804B (ZNF804B) from Homo sapiens (Human).